The sequence spans 311 residues: Putative ankyrin repeat protein RF_0923 (311 aa).

5 ANK repeats span residues 42-71 (IDNT…EQAI), 77-106 (NGNT…PQAI), 112-141 (NGNT…PQAI), 147-176 (NGNT…EQAI), and 182-213 (KGCT…AINH).

The sequence is that of Putative ankyrin repeat protein RF_0923 from Rickettsia felis (strain ATCC VR-1525 / URRWXCal2) (Rickettsia azadi).